Reading from the N-terminus, the 98-residue chain is Defensin (98 aa).

3 disulfides stabilise this stretch: Cys61–Cys88, Cys74–Cys94, and Cys78–Cys96.

This sequence belongs to the invertebrate defensin family. Type 1 subfamily.

The sequence is that of Defensin from Mamestra brassicae (Cabbage moth).